The primary structure comprises 175 residues: ATP synthase subunit d, mitochondrial (175 aa).

Ser2 carries the post-translational modification N-acetylserine.

The protein belongs to the ATPase d subunit family.

Its subcellular location is the mitochondrion inner membrane. Functionally, mitochondrial membrane ATP synthase (F(1)F(0) ATP synthase or Complex V) produces ATP from ADP in the presence of a proton gradient across the membrane which is generated by electron transport complexes of the respiratory chain. F-type ATPases consist of two structural domains, F(1) - containing the extramembraneous catalytic core, and F(0) - containing the membrane proton channel, linked together by a central stalk and a peripheral stalk. During catalysis, ATP synthesis in the catalytic domain of F(1) is coupled via a rotary mechanism of the central stalk subunits to proton translocation. Part of the complex F(0) domain and the peripheric stalk, which acts as a stator to hold the catalytic alpha(3)beta(3) subcomplex and subunit a/ATP6 static relative to the rotary elements. The polypeptide is ATP synthase subunit d, mitochondrial (atp7) (Schizosaccharomyces pombe (strain 972 / ATCC 24843) (Fission yeast)).